We begin with the raw amino-acid sequence, 383 residues long: L-Ala-D/L-Glu epimerase (383 aa).

Residues Arg68, Tyr94, and 198–200 (KVK) contribute to the substrate site. Asp224, Glu251, and Asp276 together coordinate Mg(2+). Substrate contacts are provided by residues Lys298, 326 to 328 (CMT), and 348 to 350 (DLD).

The protein belongs to the mandelate racemase/muconate lactonizing enzyme family. Requires Mg(2+) as cofactor.

It carries out the reaction L-alanyl-L-glutamate = L-alanyl-D-glutamate. In terms of biological role, catalyzes the epimerization of L-Ala-D-Glu to L-Ala-L-Glu and may play a role in the metabolism of the murein peptide, of which L-Ala-D-Glu is a component. Is also able to catalyze the epimerization of L-Ala-D-Asp, L-Ala-L-Glu, L-Ala-L-Ser, L-Ala-L-Pro, L-Ala-L-L-Val, L-Ala-L-Thr, L-Ala-L-Leu, L-Ala-L-Ile and L-Gly-L-Glu (in vitro). The chain is L-Ala-D/L-Glu epimerase from Bacteroides thetaiotaomicron (strain ATCC 29148 / DSM 2079 / JCM 5827 / CCUG 10774 / NCTC 10582 / VPI-5482 / E50).